The primary structure comprises 133 residues: Protein msa (133 aa).

4 helical membrane passes run 3–23 (YLILSLVANLLVFGVLSAIGL), 27–47 (ILAAMMMILVIPITISGILFF), 55–75 (YIFFNILFIDFYYYIYNVHLM), and 103–123 (FGFDEILFFTLYLLLILIILY).

It is found in the cell membrane. Its function is as follows. Accessory element involved in the expression of sarA and several virulence factors. Modulates SarA production and/or function in a strain-dependent manner. Affects the transcription of the accessory gene regulator (agr) and genes encoding virulence factors including alpha toxin (hla) and protein A (spa). This is Protein msa (msa) from Staphylococcus aureus (strain bovine RF122 / ET3-1).